We begin with the raw amino-acid sequence, 163 residues long: C-type lectin lectoxin-Lio1 (163 aa).

An N-terminal signal peptide occupies residues 1–21 (MERFIFAALLVVALSLSGTGA). Intrachain disulfides connect Cys-25–Cys-36, Cys-53–Cys-152, and Cys-127–Cys-144. Residues 32–153 (SDGYCYKVFK…CRSKRYFICK (122 aa)) enclose the C-type lectin domain. A Mannose-binding motif is present at residues 117–119 (EPN). Ca(2+)-binding residues include Glu-125 and Asp-141.

It belongs to the true venom lectin family. As to expression, expressed by the venom gland.

Its subcellular location is the secreted. Functionally, mannose-binding lectin which recognizes specific carbohydrate structures and agglutinates a variety of animal cells by binding to cell-surface glycoproteins and glycolipids. May be a calcium-dependent lectin. The protein is C-type lectin lectoxin-Lio1 of Erythrolamprus poecilogyrus (Water snake).